The primary structure comprises 284 residues: Acetyl-coenzyme A carboxylase carboxyl transferase subunit beta (284 aa).

Residues 31–284 form the CoA carboxyltransferase N-terminal domain; sequence FWTYCKGCDS…LYQILAMHKK (254 aa). Zn(2+) is bound by residues Cys35, Cys38, Cys54, and Cys57. A C4-type zinc finger spans residues 35–57; the sequence is CKGCDSHVFRKDIEENSFVCPKC.

This sequence belongs to the AccD/PCCB family. Acetyl-CoA carboxylase is a heterohexamer composed of biotin carboxyl carrier protein (AccB), biotin carboxylase (AccC) and two subunits each of ACCase subunit alpha (AccA) and ACCase subunit beta (AccD). It depends on Zn(2+) as a cofactor.

Its subcellular location is the cytoplasm. It catalyses the reaction N(6)-carboxybiotinyl-L-lysyl-[protein] + acetyl-CoA = N(6)-biotinyl-L-lysyl-[protein] + malonyl-CoA. The protein operates within lipid metabolism; malonyl-CoA biosynthesis; malonyl-CoA from acetyl-CoA: step 1/1. Functionally, component of the acetyl coenzyme A carboxylase (ACC) complex. Biotin carboxylase (BC) catalyzes the carboxylation of biotin on its carrier protein (BCCP) and then the CO(2) group is transferred by the transcarboxylase to acetyl-CoA to form malonyl-CoA. The chain is Acetyl-coenzyme A carboxylase carboxyl transferase subunit beta from Clostridioides difficile (strain 630) (Peptoclostridium difficile).